A 576-amino-acid polypeptide reads, in one-letter code: Arginine--tRNA ligase (576 aa).

Residues Ala126 to His136 carry the 'HIGH' region motif.

The protein belongs to the class-I aminoacyl-tRNA synthetase family. In terms of assembly, monomer.

The protein resides in the cytoplasm. It carries out the reaction tRNA(Arg) + L-arginine + ATP = L-arginyl-tRNA(Arg) + AMP + diphosphate. In Rickettsia akari (strain Hartford), this protein is Arginine--tRNA ligase.